The following is a 221-amino-acid chain: Leucine rich adaptor protein 1-like (221 aa).

M1 carries the N-acetylmethionine modification. The tract at residues 24–81 (LARSLRGEELAPREGAADPSGVGGSCSSSSSCSSFAPSVSSSSSSSPASGSPRRSHPS) is disordered. Basic and acidic residues predominate over residues 28 to 39 (LRGEELAPREGA). Residues 48–75 (SCSSSSSCSSFAPSVSSSSSSSPASGSP) are compositionally biased toward low complexity.

The chain is Leucine rich adaptor protein 1-like (Lurap1l) from Mus musculus (Mouse).